Here is a 219-residue protein sequence, read N- to C-terminus: Large ribosomal subunit protein uL3 (219 aa).

Positions 136–156 (GASHGAHRNHRKPGSIGGCAT) are disordered.

Belongs to the universal ribosomal protein uL3 family. As to quaternary structure, part of the 50S ribosomal subunit. Forms a cluster with proteins L14 and L19.

Its function is as follows. One of the primary rRNA binding proteins, it binds directly near the 3'-end of the 23S rRNA, where it nucleates assembly of the 50S subunit. The protein is Large ribosomal subunit protein uL3 of Kineococcus radiotolerans (strain ATCC BAA-149 / DSM 14245 / SRS30216).